Here is a 516-residue protein sequence, read N- to C-terminus: Apolipoprotein N-acyltransferase (516 aa).

Transmembrane regions (helical) follow at residues 24–44 (LAQA…LLYL), 58–78 (GWCY…ISIH), 90–110 (LLTL…AWLW), 125–145 (LAFA…LTGF), 163–183 (APLG…ALLV), and 192–212 (PPAL…GLAL). Positions 230–471 (VQGNVEQNLK…RAVLYGEVTP (242 aa)) constitute a CN hydrolase domain. Catalysis depends on glutamate 270, which acts as the Proton acceptor. The active site involves lysine 331. Cysteine 383 (nucleophile) is an active-site residue. The chain crosses the membrane as a helical span at residues 479–499 (LRWRAWPLAGLAVLLLGWALL).

Belongs to the CN hydrolase family. Apolipoprotein N-acyltransferase subfamily.

Its subcellular location is the cell inner membrane. The catalysed reaction is N-terminal S-1,2-diacyl-sn-glyceryl-L-cysteinyl-[lipoprotein] + a glycerophospholipid = N-acyl-S-1,2-diacyl-sn-glyceryl-L-cysteinyl-[lipoprotein] + a 2-acyl-sn-glycero-3-phospholipid + H(+). It functions in the pathway protein modification; lipoprotein biosynthesis (N-acyl transfer). In terms of biological role, catalyzes the phospholipid dependent N-acylation of the N-terminal cysteine of apolipoprotein, the last step in lipoprotein maturation. This is Apolipoprotein N-acyltransferase from Azotobacter vinelandii (strain DJ / ATCC BAA-1303).